A 70-amino-acid polypeptide reads, in one-letter code: Small ribosomal subunit protein bS21 (70 aa).

This sequence belongs to the bacterial ribosomal protein bS21 family.

This is Small ribosomal subunit protein bS21 from Nitrosomonas eutropha (strain DSM 101675 / C91 / Nm57).